The sequence spans 138 residues: ATP synthase epsilon chain, chloroplastic (138 aa).

It belongs to the ATPase epsilon chain family. As to quaternary structure, F-type ATPases have 2 components, CF(1) - the catalytic core - and CF(0) - the membrane proton channel. CF(1) has five subunits: alpha(3), beta(3), gamma(1), delta(1), epsilon(1). CF(0) has three main subunits: a, b and c.

The protein resides in the plastid. Its subcellular location is the chloroplast thylakoid membrane. In terms of biological role, produces ATP from ADP in the presence of a proton gradient across the membrane. This Huperzia lucidula (Shining clubmoss) protein is ATP synthase epsilon chain, chloroplastic.